The chain runs to 207 residues: Holliday junction branch migration complex subunit RuvA (207 aa).

Positions Met-1–Ser-71 are domain I. Positions Thr-72–Glu-149 are domain II. The interval Val-150–Glu-155 is flexible linker. The interval Val-156 to Lys-207 is domain III.

It belongs to the RuvA family. Homotetramer. Forms an RuvA(8)-RuvB(12)-Holliday junction (HJ) complex. HJ DNA is sandwiched between 2 RuvA tetramers; dsDNA enters through RuvA and exits via RuvB. An RuvB hexamer assembles on each DNA strand where it exits the tetramer. Each RuvB hexamer is contacted by two RuvA subunits (via domain III) on 2 adjacent RuvB subunits; this complex drives branch migration. In the full resolvosome a probable DNA-RuvA(4)-RuvB(12)-RuvC(2) complex forms which resolves the HJ.

It is found in the cytoplasm. In terms of biological role, the RuvA-RuvB-RuvC complex processes Holliday junction (HJ) DNA during genetic recombination and DNA repair, while the RuvA-RuvB complex plays an important role in the rescue of blocked DNA replication forks via replication fork reversal (RFR). RuvA specifically binds to HJ cruciform DNA, conferring on it an open structure. The RuvB hexamer acts as an ATP-dependent pump, pulling dsDNA into and through the RuvAB complex. HJ branch migration allows RuvC to scan DNA until it finds its consensus sequence, where it cleaves and resolves the cruciform DNA. The sequence is that of Holliday junction branch migration complex subunit RuvA from Rhodopirellula baltica (strain DSM 10527 / NCIMB 13988 / SH1).